The sequence spans 163 residues: NADH-quinone oxidoreductase subunit I (163 aa).

2 4Fe-4S ferredoxin-type domains span residues 53 to 83 (LRRY…IEAG) and 94 to 123 (VRYD…EGPN). Positions 63, 66, 69, 73, 103, 106, 109, and 113 each coordinate [4Fe-4S] cluster.

This sequence belongs to the complex I 23 kDa subunit family. NDH-1 is composed of 14 different subunits. Subunits NuoA, H, J, K, L, M, N constitute the membrane sector of the complex. It depends on [4Fe-4S] cluster as a cofactor.

The protein resides in the cell inner membrane. The enzyme catalyses a quinone + NADH + 5 H(+)(in) = a quinol + NAD(+) + 4 H(+)(out). Functionally, NDH-1 shuttles electrons from NADH, via FMN and iron-sulfur (Fe-S) centers, to quinones in the respiratory chain. The immediate electron acceptor for the enzyme in this species is believed to be ubiquinone. Couples the redox reaction to proton translocation (for every two electrons transferred, four hydrogen ions are translocated across the cytoplasmic membrane), and thus conserves the redox energy in a proton gradient. In Bartonella tribocorum (strain CIP 105476 / IBS 506), this protein is NADH-quinone oxidoreductase subunit I.